A 333-amino-acid polypeptide reads, in one-letter code: Testin-2 (333 aa).

Residues 1 to 17 (MIAVLFLAILCLEIDST) form the signal peptide. Cystine bridges form between Cys-135-Cys-178, Cys-169-Cys-211, and Cys-269-Cys-322. Asn-173 carries an N-linked (GlcNAc...) asparagine glycan. Catalysis depends on residues His-276 and Asn-300.

Belongs to the peptidase C1 family. In terms of tissue distribution, expressed in testis and ovary. Low level in spleen, epididymis, kidney, and uterus. Expressed in primary cultures of Sertoli cells.

It is found in the secreted. In Mus musculus (Mouse), this protein is Testin-2.